Consider the following 905-residue polypeptide: Protein translocase subunit SecA (905 aa).

Residues glutamine 87, 105–109 (GEGKT), and aspartate 512 each bind ATP. Residues 836–905 (DVDAVDEQRK…KKYKHCHGKL (70 aa)) are disordered. A compositionally biased stretch (basic and acidic residues) spans 841-858 (DEQRKAADSAPREFRHEQ). Zn(2+)-binding residues include cysteine 890, cysteine 892, cysteine 901, and histidine 902. Positions 896–905 (KKYKHCHGKL) are enriched in basic residues.

This sequence belongs to the SecA family. As to quaternary structure, monomer and homodimer. Part of the essential Sec protein translocation apparatus which comprises SecA, SecYEG and auxiliary proteins SecDF-YajC and YidC. It depends on Zn(2+) as a cofactor.

It localises to the cell inner membrane. It is found in the cytoplasm. The enzyme catalyses ATP + H2O + cellular proteinSide 1 = ADP + phosphate + cellular proteinSide 2.. Functionally, part of the Sec protein translocase complex. Interacts with the SecYEG preprotein conducting channel. Has a central role in coupling the hydrolysis of ATP to the transfer of proteins into and across the cell membrane, serving both as a receptor for the preprotein-SecB complex and as an ATP-driven molecular motor driving the stepwise translocation of polypeptide chains across the membrane. The chain is Protein translocase subunit SecA from Idiomarina loihiensis (strain ATCC BAA-735 / DSM 15497 / L2-TR).